The chain runs to 523 residues: Mitochondrial distribution and morphology protein 12 (523 aa).

The 483-residue stretch at 1–483 (MSFDINWEKL…WPSWICVDMA (483 aa)) folds into the SMP-LTD domain. Basic and acidic residues predominate over residues 108–117 (HEADIINDHD). 4 disordered regions span residues 108–160 (HEAD…QYDE), 178–213 (SASTPKRTSPQRPPLISPRGEVTQQTLSKPKEPFQS), 270–313 (KTKE…NAKN), and 483–523 (AEND…KKED). Composition is skewed to acidic residues over residues 118 to 140 (YGDEDDIDDDYDNDSDDYDDDEN) and 148 to 158 (EDEENEESSQY). Composition is skewed to polar residues over residues 178–187 (SASTPKRTSP) and 277–288 (SGDQQQGKQTGK). A compositionally biased stretch (basic and acidic residues) spans 289–313 (ANEKGQKHKHEHEEEQGSDKQNAKN). Residues 483–501 (AENDDEEEDDDDDDHDEDN) show a composition bias toward acidic residues. The segment covering 502 to 523 (EGRGRMRDTGDVDVRDHDKKED) has biased composition (basic and acidic residues).

The protein belongs to the MDM12 family. As to quaternary structure, component of the ER-mitochondria encounter structure (ERMES) or MDM complex, composed of MMM1, MDM10, MDM12 and MDM34. An MMM1 homodimer associates with one molecule of MDM12 on each side in a pairwise head-to-tail manner, and the SMP-LTD domains of MMM1 and MDM12 generate a continuous hydrophobic tunnel for phospholipid trafficking.

The protein resides in the mitochondrion outer membrane. It localises to the endoplasmic reticulum membrane. Its function is as follows. Component of the ERMES/MDM complex, which serves as a molecular tether to connect the endoplasmic reticulum (ER) and mitochondria. Components of this complex are involved in the control of mitochondrial shape and protein biogenesis, and function in nonvesicular lipid trafficking between the ER and mitochondria. MDM12 is required for the interaction of the ER-resident membrane protein MMM1 and the outer mitochondrial membrane-resident beta-barrel protein MDM10. The MDM12-MMM1 subcomplex functions in the major beta-barrel assembly pathway that is responsible for biogenesis of all mitochondrial outer membrane beta-barrel proteins, and acts in a late step after the SAM complex. The MDM10-MDM12-MMM1 subcomplex further acts in the TOM40-specific pathway after the action of the MDM12-MMM1 complex. Essential for establishing and maintaining the structure of mitochondria and maintenance of mtDNA nucleoids. The chain is Mitochondrial distribution and morphology protein 12 from Lodderomyces elongisporus (strain ATCC 11503 / CBS 2605 / JCM 1781 / NBRC 1676 / NRRL YB-4239) (Yeast).